A 193-amino-acid polypeptide reads, in one-letter code: Flagellar transcriptional regulator FlhC (193 aa).

Cysteine 137, cysteine 140, cysteine 158, and cysteine 161 together coordinate Zn(2+).

This sequence belongs to the FlhC family. In terms of assembly, heterohexamer composed of two FlhC and four FlhD subunits. Each FlhC binds a FlhD dimer, forming a heterotrimer, and a hexamer assembles by dimerization of two heterotrimers. Requires Zn(2+) as cofactor.

It is found in the cytoplasm. Its function is as follows. Functions in complex with FlhD as a master transcriptional regulator that regulates transcription of several flagellar and non-flagellar operons by binding to their promoter region. Activates expression of class 2 flagellar genes, including fliA, which is a flagellum-specific sigma factor that turns on the class 3 genes. Also regulates genes whose products function in a variety of physiological pathways. This chain is Flagellar transcriptional regulator FlhC, found in Pectobacterium carotovorum (Erwinia carotovora).